We begin with the raw amino-acid sequence, 79 residues long: Calcium/calmodulin-dependent protein kinase II inhibitor 2 (79 aa).

Residues 1-21 are disordered; it reads MSEILPYGEDKMGRFGADPEG. Residues 43-69 are inhibitory domain; that stretch reads KRPPKLGQIGRAKRVVIEDDRIDDVLK.

This sequence belongs to the CAMK2N family. In terms of assembly, interacts with CAMK2A and CAMK2B in the presence of Ca(2+)/calmodulin or after autophosphorylation.

The protein localises to the nucleus. It localises to the cytoplasm. It is found in the cytosol. The protein resides in the synapse. Its function is as follows. Potent and specific cellular inhibitor of CaM-kinase II (CAMK2). Traps Ca(2+)/calmodulin on CAMK2. In Mus musculus (Mouse), this protein is Calcium/calmodulin-dependent protein kinase II inhibitor 2 (Camk2n2).